Here is a 224-residue protein sequence, read N- to C-terminus: MLGSPKLTARQQQILDLIQNAITLTGSPPTRAEIATELGFRSANAAEEHLQALARKGAIELVSGTSRGIRLKSEALRSINESRSKQFPLSLPGLSQLMLPLIGRVAAGSPILAQEHIDQTYYVESSLFQRKPDYLLKVRGMSMRDAGIMDGDLLAVQSTRDAKNGQIVVARLGDEVTVKRFRRTKDLIELCPENPDYQIIVVEPGEPFEIEGLAVGLIRNTMLM.

Positions 31 to 51 (RAEIATELGFRSANAAEEHLQ) form a DNA-binding region, H-T-H motif. Catalysis depends on for autocatalytic cleavage activity residues serine 142 and lysine 179.

Belongs to the peptidase S24 family. In terms of assembly, homodimer.

It catalyses the reaction Hydrolysis of Ala-|-Gly bond in repressor LexA.. Represses a number of genes involved in the response to DNA damage (SOS response), including recA and lexA. In the presence of single-stranded DNA, RecA interacts with LexA causing an autocatalytic cleavage which disrupts the DNA-binding part of LexA, leading to derepression of the SOS regulon and eventually DNA repair. The polypeptide is LexA repressor (Albidiferax ferrireducens (strain ATCC BAA-621 / DSM 15236 / T118) (Rhodoferax ferrireducens)).